We begin with the raw amino-acid sequence, 338 residues long: Fructose-1,6-bisphosphatase class 1 (338 aa).

Glutamate 91, aspartate 113, leucine 115, and aspartate 116 together coordinate Mg(2+). Residues 116–119, asparagine 211, tyrosine 244, and lysine 277 each bind substrate; that span reads DGSS. Residue glutamate 283 coordinates Mg(2+).

The protein belongs to the FBPase class 1 family. Homotetramer. Mg(2+) is required as a cofactor.

Its subcellular location is the cytoplasm. The enzyme catalyses beta-D-fructose 1,6-bisphosphate + H2O = beta-D-fructose 6-phosphate + phosphate. Its pathway is carbohydrate biosynthesis; gluconeogenesis. In Oleidesulfovibrio alaskensis (strain ATCC BAA-1058 / DSM 17464 / G20) (Desulfovibrio alaskensis), this protein is Fructose-1,6-bisphosphatase class 1.